A 369-amino-acid chain; its full sequence is 3,7-dimethylxanthine N-methyltransferase TCS1 (369 aa).

S-adenosyl-L-homocysteine is bound at residue Y24. T31 contacts caffeine. C66, N71, D103, L104, S138, and F139 together coordinate S-adenosyl-L-homocysteine. Caffeine is bound by residues Y156, H159, and W160. Residue N177 participates in Mg(2+) binding. R225 provides a ligand contact to caffeine. Residues D263, F265, and N266 each contribute to the Mg(2+) site. F321 provides a ligand contact to caffeine.

This sequence belongs to the methyltransferase superfamily. Type-7 methyltransferase family. The cofactor is Mg(2+). In terms of tissue distribution, expressed in young leaves and flowers.

It catalyses the reaction 7-methylxanthine + S-adenosyl-L-methionine = theobromine + S-adenosyl-L-homocysteine + H(+). It carries out the reaction theobromine + S-adenosyl-L-methionine = caffeine + S-adenosyl-L-homocysteine + H(+). The enzyme catalyses 1,7-dimethylxanthine + S-adenosyl-L-methionine = caffeine + S-adenosyl-L-homocysteine + H(+). It functions in the pathway alkaloid biosynthesis. Functionally, involved in the biosynthesis of caffeine. Catalyzes the conversion of 7-methylxanthine (7mX) to theobromine and of theobromine to caffeine. Has 3-N- and 1-N-methylation activity. This is 3,7-dimethylxanthine N-methyltransferase TCS1 from Camellia sinensis (Tea plant).